We begin with the raw amino-acid sequence, 411 residues long: S-adenosylmethionine synthase (411 aa).

Residue H15 participates in ATP binding. D17 lines the Mg(2+) pocket. A K(+)-binding site is contributed by E43. Positions 56 and 100 each coordinate L-methionine. The interval Q100–E110 is flexible loop. ATP contacts are provided by residues D171–K173, K248–F249, D257, R263–K264, A280, and K284. An L-methionine-binding site is contributed by D257. L-methionine is bound at residue K288.

The protein belongs to the AdoMet synthase family. As to quaternary structure, homotetramer; dimer of dimers. Mg(2+) is required as a cofactor. Requires K(+) as cofactor.

The protein resides in the cytoplasm. The enzyme catalyses L-methionine + ATP + H2O = S-adenosyl-L-methionine + phosphate + diphosphate. It functions in the pathway amino-acid biosynthesis; S-adenosyl-L-methionine biosynthesis; S-adenosyl-L-methionine from L-methionine: step 1/1. Functionally, catalyzes the formation of S-adenosylmethionine (AdoMet) from methionine and ATP. The overall synthetic reaction is composed of two sequential steps, AdoMet formation and the subsequent tripolyphosphate hydrolysis which occurs prior to release of AdoMet from the enzyme. The protein is S-adenosylmethionine synthase of Synechococcus sp. (strain CC9605).